The primary structure comprises 968 residues: Catenin delta-1 (968 aa).

Methionine 1 bears the N-acetylmethionine mark. The necessary and sufficient for interaction with CCDC85B stretch occupies residues 1–357 (MDDSEVESTA…ASLDSLRKGG (357 aa)). Phosphoserine is present on serine 4. Positions 10–46 (ASILASVKEQEAQFEKLTRALEEERRHVSAQLERVRV) form a coiled coil. Phosphoserine is present on serine 47. At threonine 59 the chain carries Phosphothreonine. A Phosphotyrosine; by FYN modification is found at tyrosine 112. Serine 125 is subject to Phosphoserine. A phosphotyrosine mark is found at tyrosine 217 and tyrosine 221. Serine 225 is subject to Phosphoserine. The residue at position 228 (tyrosine 228) is a Phosphotyrosine. Serine 230 and serine 252 each carry phosphoserine. Residue tyrosine 257 is modified to Phosphotyrosine. A phosphoserine mark is found at serine 268 and serine 269. The residue at position 280 (tyrosine 280) is a Phosphotyrosine. Serine 288 is modified (phosphoserine; by PAK5). The residue at position 291 (tyrosine 291) is a Phosphotyrosine. The short motif at 299 to 306 (MSDYGTAR) is the Nuclear localization signal (NLS) element. Serine 300 carries the post-translational modification Phosphoserine. Residue threonine 304 is modified to Phosphothreonine. Phosphoserine is present on residues serine 320, serine 346, serine 349, and serine 352. ARM repeat units lie at residues 358–395 (PPPP…HLCY), 398–437 (DKVK…NISF), 441–475 (QDNK…ITGT), and 476–516 (LWNL…NEDC). Lysine 421 is covalently cross-linked (Glycyl lysine isopeptide (Lys-Gly) (interchain with G-Cter in SUMO2)). Lysine 517 is covalently cross-linked (Glycyl lysine isopeptide (Lys-Gly) (interchain with G-Cter in SUMO2)). The Nuclear localization signal (NLS) motif lies at 521–528 (IEWESVLT). ARM repeat units lie at residues 534 to 573 (LRNV…DSDS), 583 to 624 (LRNL…AKKG), 653 to 693 (ARGY…NLCA), 700 to 739 (RYIR…NLAV), 740 to 780 (DARN…SILN), and 781 to 826 (TINE…ALVL). Residues isoleucine 566, aspartate 572, serine 587, and glutamate 593 each carry the phosphothreonine modification. Residues 568-575 (QKDSDSKL) carry the Nuclear localization signal (NLS) motif. Serine 617 is subject to Phosphoserine. A Nuclear localization signal (NLS) motif is present at residues 622–629 (KKGKDEWF). The residue at position 713 (serine 713) is a Phosphoserine. A phosphothreonine mark is found at glutamate 788, lysine 794, and asparagine 809. Phosphoserine is present on serine 811. Phosphothreonine is present on residues serine 815, leucine 835, and lysine 841. Serine 847 is subject to Phosphoserine. Residues 855–944 (NASRSQSSHS…LMQDEGQESL (90 aa)) form a disordered region. Alanine 856 is subject to Phosphothreonine. 3 positions are modified to phosphoserine: serine 857, serine 859, and serine 861. Serine 862 carries the post-translational modification Phosphothreonine. Position 864 is a phosphoserine (serine 864). Phosphotyrosine is present on tyrosine 865. Phosphoserine is present on serine 868. Threonine 869 carries the phosphothreonine modification. A compositionally biased stretch (basic and acidic residues) spans 875–888 (RNQKSDKKPDREEI). A Phosphoserine modification is found at serine 879. Residue lysine 882 forms a Glycyl lysine isopeptide (Lys-Gly) (interchain with G-Cter in SUMO2) linkage. 2 positions are modified to phosphothreonine: glutamine 889 and serine 895. A compositionally biased stretch (polar residues) spans 889–908 (QMSNMGSNTKSLDNNYSTPN). Serine 899 is modified (phosphoserine). Position 904 is a phosphotyrosine (tyrosine 904). Threonine 906, arginine 910, and threonine 916 each carry phosphothreonine. A compositionally biased stretch (basic and acidic residues) spans 909 to 922 (ERGDHNRTLDRSGD). Phosphoserine is present on residues serine 920 and serine 943.

This sequence belongs to the beta-catenin family. As to quaternary structure, belongs to a multiprotein cell-cell adhesion complex that also contains E-cadherin/CDH1, alpha-catenin/CTNNA1, beta-catenin/CTNNB1, and gamma-catenin/JUP. Component of a cadherin:catenin adhesion complex composed of at least of CDH26, beta-catenin/CTNNB1, alpha-catenin/CTNNA1 and p120 catenin/CTNND1. Binds to the C-terminal fragment of PSEN1 and mutually competes for CDH1. Interacts with ZBTB33. Interacts with GLIS2. Interacts with FER. Interacts with NANOS1 (via N-terminal region). Interacts (via N-terminus) with GNA12; the interaction regulates CDH1-mediated cell-cell adhesion. Interacts with GNA13. Interacts with CCDC85B. Interacts with PLPP3; negatively regulates the PLPP3-mediated stabilization of CTNNB1. Interacts with DSG3; the interaction facilitates DSG3 localization and retention at cell-cell junctions. Interacts with CTNND1/p120-catenin; the interaction controls CADH5 endocytosis. Phosphorylated by FER and other protein-tyrosine kinases. Phosphorylated at Ser-288 by PAK5. Dephosphorylated by PTPRJ. In terms of tissue distribution, expressed in vascular endothelium. Melanocytes and melanoma cells primarily express the long isoform 1A, whereas keratinocytes express shorter isoforms, especially 3A. The shortest isoform 4A, is detected in normal keratinocytes and melanocytes, and generally lost from cells derived from squamous cell carcinomas or melanomas. The C-terminal alternatively spliced exon B is present in the p120ctn transcripts in the colon, intestine and prostate, but lost in several tumor tissues derived from these organs.

The protein localises to the cell junction. It localises to the adherens junction. It is found in the cytoplasm. Its subcellular location is the nucleus. The protein resides in the cell membrane. Key regulator of cell-cell adhesion that associates with and regulates the cell adhesion properties of both C-, E- and N-cadherins, being critical for their surface stability. Promotes localization and retention of DSG3 at cell-cell junctions, via its interaction with DSG3. Beside cell-cell adhesion, regulates gene transcription through several transcription factors including ZBTB33/Kaiso2 and GLIS2, and the activity of Rho family GTPases and downstream cytoskeletal dynamics. Implicated both in cell transformation by SRC and in ligand-induced receptor signaling through the EGF, PDGF, CSF-1 and ERBB2 receptors. The sequence is that of Catenin delta-1 from Homo sapiens (Human).